A 363-amino-acid polypeptide reads, in one-letter code: tRNA/tmRNA (uracil-C(5))-methyltransferase (363 aa).

The S-adenosyl-L-methionine site is built by Gln187, Tyr215, Asn220, Glu236, and Asp296. Residue Cys321 is the Nucleophile of the active site. Glu355 functions as the Proton acceptor in the catalytic mechanism.

This sequence belongs to the class I-like SAM-binding methyltransferase superfamily. RNA M5U methyltransferase family. TrmA subfamily.

It carries out the reaction uridine(54) in tRNA + S-adenosyl-L-methionine = 5-methyluridine(54) in tRNA + S-adenosyl-L-homocysteine + H(+). The catalysed reaction is uridine(341) in tmRNA + S-adenosyl-L-methionine = 5-methyluridine(341) in tmRNA + S-adenosyl-L-homocysteine + H(+). In terms of biological role, dual-specificity methyltransferase that catalyzes the formation of 5-methyluridine at position 54 (m5U54) in all tRNAs, and that of position 341 (m5U341) in tmRNA (transfer-mRNA). This is tRNA/tmRNA (uracil-C(5))-methyltransferase from Pseudomonas aeruginosa (strain ATCC 15692 / DSM 22644 / CIP 104116 / JCM 14847 / LMG 12228 / 1C / PRS 101 / PAO1).